Here is a 404-residue protein sequence, read N- to C-terminus: Cysteine desulfurase IscS (404 aa).

Pyridoxal 5'-phosphate-binding positions include 75-76 (AT), Asn-155, Gln-183, and 203-205 (SGH). At Lys-206 the chain carries N6-(pyridoxal phosphate)lysine. Residue Thr-243 participates in pyridoxal 5'-phosphate binding. Catalysis depends on Cys-328, which acts as the Cysteine persulfide intermediate. A [2Fe-2S] cluster-binding site is contributed by Cys-328.

Belongs to the class-V pyridoxal-phosphate-dependent aminotransferase family. NifS/IscS subfamily. In terms of assembly, homodimer. Forms a heterotetramer with IscU, interacts with other sulfur acceptors. The cofactor is pyridoxal 5'-phosphate.

The protein localises to the cytoplasm. The catalysed reaction is (sulfur carrier)-H + L-cysteine = (sulfur carrier)-SH + L-alanine. It participates in cofactor biosynthesis; iron-sulfur cluster biosynthesis. In terms of biological role, master enzyme that delivers sulfur to a number of partners involved in Fe-S cluster assembly, tRNA modification or cofactor biosynthesis. Catalyzes the removal of elemental sulfur atoms from cysteine to produce alanine. Functions as a sulfur delivery protein for Fe-S cluster synthesis onto IscU, an Fe-S scaffold assembly protein, as well as other S acceptor proteins. The polypeptide is Cysteine desulfurase IscS (Shewanella denitrificans (strain OS217 / ATCC BAA-1090 / DSM 15013)).